The chain runs to 98 residues: NADH-ubiquinone oxidoreductase chain 4L (98 aa).

A run of 3 helical transmembrane segments spans residues 1 to 21, 29 to 49, and 61 to 81; these read MSLVHMNIALAFTVALLGLLM, SLLCLEGMMLTLFIMGTIMIL, and IILLVFAACEAAVGLSLLVMV.

It belongs to the complex I subunit 4L family. In terms of assembly, core subunit of respiratory chain NADH dehydrogenase (Complex I) which is composed of 45 different subunits.

The protein localises to the mitochondrion inner membrane. It carries out the reaction a ubiquinone + NADH + 5 H(+)(in) = a ubiquinol + NAD(+) + 4 H(+)(out). In terms of biological role, core subunit of the mitochondrial membrane respiratory chain NADH dehydrogenase (Complex I) which catalyzes electron transfer from NADH through the respiratory chain, using ubiquinone as an electron acceptor. Part of the enzyme membrane arm which is embedded in the lipid bilayer and involved in proton translocation. This chain is NADH-ubiquinone oxidoreductase chain 4L (MT-ND4L), found in Sorex unguiculatus (Long-clawed shrew).